Reading from the N-terminus, the 277-residue chain is MSRNPFDDDYRPSAASSTMPVKSYTTMGHYSGEDEADYYEREIEKTLQESLDSTERSRRHLENSEKIGTSTAQQLLEQREKLENTEKNLDEIHRTTQMTQRNLNSLKSFFGGMFKNKFTKKPQEPTETPTVPQSKSASRLSETATNLSSGGGSATFSGPSGQRTLTESSRSAIKGTRWEAMDNQIDENLDMMSANLRNLQRLGADLGKEVDSQNEMLDRIQYKAERNDGIVRDQDKQMQKILGTGASTSQTTAESLTPSMDTSTKMSLMMKATSLWK.

Positions 1–11 are enriched in basic and acidic residues; sequence MSRNPFDDDYR. 3 disordered regions span residues 1 to 30, 49 to 73, and 117 to 170; these read MSRNPFDDDYRPSAASSTMPVKSYTTMGHY, ESLDSTERSRRHLENSEKIGTSTAQ, and KFTK…ESSR. Polar residues predominate over residues 14 to 28; the sequence is AASSTMPVKSYTTMG. Positions 44 to 106 constitute a t-SNARE coiled-coil homology 1 domain; it reads EKTLQESLDS…QMTQRNLNSL (63 aa). Basic and acidic residues predominate over residues 49-65; that stretch reads ESLDSTERSRRHLENSE. The span at 134–170 shows a compositional bias: polar residues; sequence SKSASRLSETATNLSSGGGSATFSGPSGQRTLTESSR. The 63-residue stretch at 179–241 folds into the t-SNARE coiled-coil homology 2 domain; it reads EAMDNQIDEN…RDQDKQMQKI (63 aa).

Belongs to the SNAP-25 family.

The protein localises to the synapse. Its subcellular location is the synaptosome. SNAREs, soluble N-ethylmaleimide-sensitive factor-attachment protein receptors, are essential proteins for fusion of cellular membranes. SNAREs localized on opposing membranes assemble to form a trans-SNARE complex, an extended, parallel four alpha-helical bundle that drives membrane fusion. Plays a role in the processing and secretion of the aspartic protease hrg-7 from the intestine. The sequence is that of Soluble NSF attachment protein 29 from Caenorhabditis elegans.